A 225-amino-acid chain; its full sequence is Octanoyltransferase (225 aa).

In terms of domain architecture, BPL/LPL catalytic spans 31–214; it reads ENTCDEVWLV…ELTTLLDYTD (184 aa). Residues 70–77, 137–139, and 150–152 each bind substrate; these read RGGQVTYH, SLG, and GLA. The active-site Acyl-thioester intermediate is cysteine 168.

It belongs to the LipB family.

The protein localises to the cytoplasm. It catalyses the reaction octanoyl-[ACP] + L-lysyl-[protein] = N(6)-octanoyl-L-lysyl-[protein] + holo-[ACP] + H(+). It participates in protein modification; protein lipoylation via endogenous pathway; protein N(6)-(lipoyl)lysine from octanoyl-[acyl-carrier-protein]: step 1/2. Functionally, catalyzes the transfer of endogenously produced octanoic acid from octanoyl-acyl-carrier-protein onto the lipoyl domains of lipoate-dependent enzymes. Lipoyl-ACP can also act as a substrate although octanoyl-ACP is likely to be the physiological substrate. In Aliivibrio fischeri (strain ATCC 700601 / ES114) (Vibrio fischeri), this protein is Octanoyltransferase.